Here is a 153-residue protein sequence, read N- to C-terminus: uncharacterized protein (153 aa).

A run of 3 helical transmembrane segments spans residues 17–37 (ITLIGYWIASILAIIIYSMFF), 44–64 (FLLCLLLPTPIIWFNILIGMG), and 118–138 (FVFIVGLVLIVGFTIITTLII).

This sequence to M.jannaschii MJ0129 and MJ0554.

The protein resides in the cell membrane. This is an uncharacterized protein from Methanocaldococcus jannaschii (strain ATCC 43067 / DSM 2661 / JAL-1 / JCM 10045 / NBRC 100440) (Methanococcus jannaschii).